The sequence spans 209 residues: Orotate phosphoribosyltransferase (209 aa).

Residues Arg96, Lys100, His102, and 122 to 130 (EDLISTGGS) contribute to the 5-phospho-alpha-D-ribose 1-diphosphate site. Ser126 provides a ligand contact to orotate.

It belongs to the purine/pyrimidine phosphoribosyltransferase family. PyrE subfamily. Homodimer. It depends on Mg(2+) as a cofactor.

The catalysed reaction is orotidine 5'-phosphate + diphosphate = orotate + 5-phospho-alpha-D-ribose 1-diphosphate. It functions in the pathway pyrimidine metabolism; UMP biosynthesis via de novo pathway; UMP from orotate: step 1/2. Functionally, catalyzes the transfer of a ribosyl phosphate group from 5-phosphoribose 1-diphosphate to orotate, leading to the formation of orotidine monophosphate (OMP). The sequence is that of Orotate phosphoribosyltransferase from Listeria monocytogenes serovar 1/2a (strain ATCC BAA-679 / EGD-e).